Here is a 586-residue protein sequence, read N- to C-terminus: Ferredoxin--nitrite reductase, chloroplastic (586 aa).

Positions 1 to 18 (MTSFSLTFTSPLLPSSST) are enriched in low complexity. Residues 1–20 (MTSFSLTFTSPLLPSSSTKP) are disordered. A chloroplast-targeting transit peptide spans 1-25 (MTSFSLTFTSPLLPSSSTKPKRSVL). A Glycyl lysine isopeptide (Lys-Gly) (interchain with G-Cter in ubiquitin) cross-link involves residue Lys103. Cys464, Cys470, Cys505, and Cys509 together coordinate [4Fe-4S] cluster. Cys509 is a binding site for siroheme.

This sequence belongs to the nitrite and sulfite reductase 4Fe-4S domain family. Monomer. Siroheme is required as a cofactor. The cofactor is [4Fe-4S] cluster.

It is found in the plastid. Its subcellular location is the chloroplast. It carries out the reaction 6 oxidized [2Fe-2S]-[ferredoxin] + NH4(+) + 2 H2O = nitrite + 6 reduced [2Fe-2S]-[ferredoxin] + 8 H(+). Its pathway is nitrogen metabolism; nitrate reduction (assimilation). Functionally, catalyzes the six-electron reduction of nitrite to ammonium. This chain is Ferredoxin--nitrite reductase, chloroplastic (NIR1), found in Arabidopsis thaliana (Mouse-ear cress).